Reading from the N-terminus, the 219-residue chain is MPPRPRFDRRAPVRELPNINDRINYPKLRVVDADGTQLGVINREEALDVAKDRELDLVLVSEKADPPVCRIMDYGKFKFEQEKKAKEAKKKSHQTEVKEVKMRYKIDQHDYNVRIGQAVRFLKAGDKVKCTVIFRGREIQHTALAETLLRRMAKDLEEQAEIQQAPKREGRNMIMFLTPRKTPLIKTDKENQIPTRAVRTITAPPRATAAAKTQLNKDQ.

This sequence belongs to the IF-3 family. Monomer.

It localises to the cytoplasm. Functionally, IF-3 binds to the 30S ribosomal subunit and shifts the equilibrium between 70S ribosomes and their 50S and 30S subunits in favor of the free subunits, thus enhancing the availability of 30S subunits on which protein synthesis initiation begins. The protein is Translation initiation factor IF-3 of Prochlorococcus marinus (strain MIT 9313).